The following is a 535-amino-acid chain: MTVVCWSSRLLLLLPYLLLCVFGPSASHAGRLLVFPMDGSHWLSMLGVIQQLQQKGHEVVVIAPEASIHIKEGSFYTLRKFPVPFQKENVTATLVELGRTAFNQDSFLLRVVKIYMKVKRDSSMLLAGCSHLLHNAEFMASLEESHFDALLTDPFLPCGSIVAQYLTVPTVYFLNKLPCSLDSEATQCPVPLSYVPKSLSFNSDRMNFLQRVKNVLLAVSENFMCRVVYSPYGSLATEILQKEVTVQDLLSPASIWLMRSDFVKDYPRPIMPNMVFIGGINCLQKKPLSQEFEAYVNASGEHGIVVFSLGSMVSEIPEKKAMEIAEALGRIPQTVLWRYTGTRPSNLAKNTILVKWLPQNDLLGHPKTRAFITHSGSHGIYEGICNGVPMVMMPLFGDQMDNAKRMETRGAGVTLNVLEMTADDLENALKTVINNKSYKENIMRLSSLHKDRPIEPLDLAVFWVEYVMRHKGAPHLRPAAHDLTWYQYHSLDVIGFLLAIVLTVVFIVFKCCAYGCRKCFGGKGRVKKSHKSKTH.

The first 29 residues, 1-29, serve as a signal peptide directing secretion; it reads MTVVCWSSRLLLLLPYLLLCVFGPSASHA. Residues Asn-89, Asn-297, and Asn-435 are each glycosylated (N-linked (GlcNAc...) asparagine). A helical membrane pass occupies residues 493–509; sequence VIGFLLAIVLTVVFIVF.

The protein belongs to the UDP-glycosyltransferase family. In terms of assembly, homodimers. Homooligomer. Interacts with UGT1A3, UGT1A4, UGT1A6, UGT1A7, UGT1A8, UGT1A9 and UGT1A10 to form heterodimers. Highly expressed in liver and at lower levels in colon, kidney, stomach and intestine.

The protein localises to the endoplasmic reticulum membrane. The enzyme catalyses glucuronate acceptor + UDP-alpha-D-glucuronate = acceptor beta-D-glucuronoside + UDP + H(+). The catalysed reaction is 17beta-estradiol + UDP-alpha-D-glucuronate = 17beta-estradiol 3-O-(beta-D-glucuronate) + UDP + H(+). It carries out the reaction 2-hydroxyestrone + UDP-alpha-D-glucuronate = 2-hydroxyestrone 3-O-(beta-D-glucuronate) + UDP + H(+). It catalyses the reaction 2-hydroxy-17beta-estradiol + UDP-alpha-D-glucuronate = 2-hydroxy-17beta-estradiol 3-O-(beta-D-glucuronate) + UDP + H(+). The enzyme catalyses 2-methoxy-17beta-estradiol + UDP-alpha-D-glucuronate = 2-methoxy-17beta-estradiol 3-O-(beta-D-glucuronate) + UDP + H(+). The catalysed reaction is 17alpha-estradiol + UDP-alpha-D-glucuronate = 17alpha-estradiol 3-O-(beta-D-glucuronate) + UDP + H(+). It carries out the reaction 16beta,17beta-estriol + UDP-alpha-D-glucuronate = 16beta,17beta-estriol 16-O-(beta-D-glucuronate) + UDP + H(+). It catalyses the reaction losartan + UDP-alpha-D-glucuronate = losartan-2-N-beta-D-glucuronide + UDP. The enzyme catalyses prunetin + UDP-alpha-D-glucuronate = prunetin-4'-O-beta-D-glucuronide + UDP. The catalysed reaction is SN-38 + UDP-alpha-D-glucuronate = SN-38 O-beta-D-glucuronide + UDP + H(+). It carries out the reaction (4Z,15Z)-bilirubin IXalpha + UDP-alpha-D-glucuronate = (4Z,15Z)-bilirubin IXalpha C12-beta-D-glucuronoside + UDP. It catalyses the reaction (4Z,15Z)-bilirubin IXalpha + UDP-alpha-D-glucuronate = (4Z,15Z)-bilirubin IXalpha C8-beta-D-glucuronoside + UDP. The enzyme catalyses (4Z,15Z)-bilirubin IXalpha C8-beta-D-glucuronoside + UDP-alpha-D-glucuronate = (4Z,15Z)-bilirubin IXalpha C8,C12-beta-D-bisglucuronoside + UDP. The catalysed reaction is (4Z,15Z)-bilirubin IXalpha C12-beta-D-glucuronoside + UDP-alpha-D-glucuronate = (4Z,15Z)-bilirubin IXalpha C8,C12-beta-D-bisglucuronoside + UDP. It carries out the reaction 8-iso-prostaglandin F2alpha + UDP-alpha-D-glucuronate = 8-iso-prostaglandin F2alpha-glucuronide + UDP + H(+). It catalyses the reaction (5Z,8Z,11Z,14Z)-eicosatetraenoate + UDP-alpha-D-glucuronate = O-[(5Z),(8Z),(11Z),(14Z)-eicosatetraenoyl]-beta-D-glucuronate + UDP. The enzyme catalyses 15-hydroxy-(5Z,8Z,11Z,13E)-eicosatetraenoate + UDP-alpha-D-glucuronate = 15-O-(beta-D-glucuronosyl)-(5Z,8Z,11Z,14Z)-eicosatetraenoate + UDP + H(+). The catalysed reaction is 20-hydroxy-(5Z,8Z,11Z,14Z)-eicosatetraenoate + UDP-alpha-D-glucuronate = 20-O-(beta-D-glucuronosyl)-(5Z,8Z,11Z,14Z)-eicosatetraenoate + UDP + H(+). It carries out the reaction prostaglandin B1 + UDP-alpha-D-glucuronate = 15-O-(beta-D-glucuronosyl)-prostaglandin B1 + UDP + H(+). It catalyses the reaction (E)-ferulate + UDP-alpha-D-glucuronate = (E)-4-O-(beta-D-glucuronosyl)-ferulate + UDP + H(+). The enzyme catalyses (E)-ferulate + UDP-alpha-D-glucuronate = (E)-ferulic acid beta-D-glucuronate ester + UDP. Functionally, UDP-glucuronosyltransferase (UGT) that catalyzes phase II biotransformation reactions in which lipophilic substrates are conjugated with glucuronic acid to increase the metabolite's water solubility, thereby facilitating excretion into either the urine or bile. Essential for the elimination and detoxification of drugs, xenobiotics and endogenous compounds. Catalyzes the glucuronidation of endogenous estrogen hormones such as estradiol, estrone and estriol. Involved in the glucuronidation of bilirubin, a degradation product occurring in the normal catabolic pathway that breaks down heme in vertebrates. Involved in the glucuronidation of arachidonic acid (AA) and AA-derived eicosanoids including 15-HETE, 20-HETE, PGB1 and F2-isoprostane (8-iso-PGF2alpha). Involved in the glucuronidation of the phytochemical ferulic acid at the phenolic or the carboxylic acid group. Also catalyzes the glucuronidation the isoflavones genistein, daidzein, glycitein, formononetin, biochanin A and prunetin, which are phytoestrogens with anticancer and cardiovascular properties. Involved in the glucuronidation of the AGTR1 angiotensin receptor antagonist losartan, a drug which can inhibit the effect of angiotensin II. Involved in the biotransformation of 7-ethyl-10-hydroxycamptothecin (SN-38), the pharmacologically active metabolite of the anticancer drug irinotecan. The sequence is that of UDP-glucuronosyltransferase 1A1 from Mus musculus (Mouse).